The following is a 424-amino-acid chain: Histidine--tRNA ligase (424 aa).

The protein belongs to the class-II aminoacyl-tRNA synthetase family. As to quaternary structure, homodimer.

The protein localises to the cytoplasm. It catalyses the reaction tRNA(His) + L-histidine + ATP = L-histidyl-tRNA(His) + AMP + diphosphate + H(+). In Escherichia coli O127:H6 (strain E2348/69 / EPEC), this protein is Histidine--tRNA ligase.